Consider the following 623-residue polypeptide: Methionine--tRNA ligase (623 aa).

A 'HIGH' region motif is present at residues 11 to 21 (PYANGPRHIGH). Cys-143, Cys-146, Cys-156, and Cys-159 together coordinate Zn(2+). Residues 347–351 (KFSSS) carry the 'KMSKS' region motif. An ATP-binding site is contributed by Ser-350.

This sequence belongs to the class-I aminoacyl-tRNA synthetase family. MetG type 1 subfamily. As to quaternary structure, monomer. It depends on Zn(2+) as a cofactor.

Its subcellular location is the cytoplasm. It catalyses the reaction tRNA(Met) + L-methionine + ATP = L-methionyl-tRNA(Met) + AMP + diphosphate. In terms of biological role, is required not only for elongation of protein synthesis but also for the initiation of all mRNA translation through initiator tRNA(fMet) aminoacylation. The polypeptide is Methionine--tRNA ligase (Bifidobacterium animalis subsp. lactis (strain AD011)).